Reading from the N-terminus, the 380-residue chain is Cytochrome b (380 aa).

Helical transmembrane passes span 33-53, 77-98, 113-133, and 178-198; these read FGSL…FLAM, WMIR…FLHI, WNIG…GYVL, and FFTL…LHLL. The heme b site is built by His-83 and His-97. 2 residues coordinate heme b: His-182 and His-196. Residue His-201 coordinates a ubiquinone. A run of 4 helical transmembrane segments spans residues 226–246, 288–308, 320–340, and 347–367; these read IKDI…TLLS, LGGV…PALH, LSQF…WIGG, and FITI…LLMP.

Belongs to the cytochrome b family. In terms of assembly, the cytochrome bc1 complex contains 11 subunits: 3 respiratory subunits (MT-CYB, CYC1 and UQCRFS1), 2 core proteins (UQCRC1 and UQCRC2) and 6 low-molecular weight proteins (UQCRH/QCR6, UQCRB/QCR7, UQCRQ/QCR8, UQCR10/QCR9, UQCR11/QCR10 and a cleavage product of UQCRFS1). This cytochrome bc1 complex then forms a dimer. It depends on heme b as a cofactor.

It localises to the mitochondrion inner membrane. Functionally, component of the ubiquinol-cytochrome c reductase complex (complex III or cytochrome b-c1 complex) that is part of the mitochondrial respiratory chain. The b-c1 complex mediates electron transfer from ubiquinol to cytochrome c. Contributes to the generation of a proton gradient across the mitochondrial membrane that is then used for ATP synthesis. The polypeptide is Cytochrome b (MT-CYB) (Pongo abelii (Sumatran orangutan)).